Consider the following 99-residue polypeptide: Small ribosomal subunit protein uS14 (99 aa).

It belongs to the universal ribosomal protein uS14 family. As to quaternary structure, part of the 30S ribosomal subunit. Contacts proteins S3 and S10.

Binds 16S rRNA, required for the assembly of 30S particles and may also be responsible for determining the conformation of the 16S rRNA at the A site. The sequence is that of Small ribosomal subunit protein uS14 from Bacteroides fragilis (strain ATCC 25285 / DSM 2151 / CCUG 4856 / JCM 11019 / LMG 10263 / NCTC 9343 / Onslow / VPI 2553 / EN-2).